Here is a 387-residue protein sequence, read N- to C-terminus: Patatin-05 (387 aa).

An N-terminal signal peptide occupies residues 1–23 (MATTKSVLVLIFMILATTSSTFA). A PNPLA domain is found at 32-230 (LSIDGGGIKG…TVADPALLSV (199 aa)). The GXGXXG signature appears at 36–41 (GGGIKG). Positions 75–79 (GTSTG) match the GXSXG motif. The Nucleophile role is filled by S77. 2 N-linked (GlcNAc...) asparagine glycosylation sites follow: N115 and N203. The active-site Proton acceptor is the D216. A DGA/G motif is present at residues 216-218 (DGA).

The protein belongs to the patatin family. Tuber.

The protein localises to the vacuole. In terms of biological role, probable lipolytic acyl hydrolase (LAH), an activity which is thought to be involved in the response of tubers to pathogens. The protein is Patatin-05 (pat1-k1) of Solanum tuberosum (Potato).